The following is a 179-amino-acid chain: Large ribosomal subunit protein uL5 (179 aa).

The residue at position 3 (lysine 3) is an N6-acetyllysine.

It belongs to the universal ribosomal protein uL5 family. In terms of assembly, part of the 50S ribosomal subunit; part of the 5S rRNA/L5/L18/L25 subcomplex. Contacts the 5S rRNA and the P site tRNA. Forms a bridge to the 30S subunit in the 70S ribosome.

Functionally, this is one of the proteins that bind and probably mediate the attachment of the 5S RNA into the large ribosomal subunit, where it forms part of the central protuberance. In the 70S ribosome it contacts protein S13 of the 30S subunit (bridge B1b), connecting the 2 subunits; this bridge is implicated in subunit movement. Contacts the P site tRNA; the 5S rRNA and some of its associated proteins might help stabilize positioning of ribosome-bound tRNAs. The protein is Large ribosomal subunit protein uL5 of Escherichia coli O45:K1 (strain S88 / ExPEC).